Here is a 214-residue protein sequence, read N- to C-terminus: Holliday junction branch migration complex subunit RuvA (214 aa).

The tract at residues 1 to 63 is domain I; sequence MISSLRGTVL…EDSLTLFGFP (63 aa). The segment at 64–139 is domain II; sequence GPDELRAFEL…KLFVTQPRTR (76 aa). The interval 139–143 is flexible linker; it reads RSASS. The domain III stretch occupies residues 144–214; that stretch reads AASTVTADVV…APAAAQAADR (71 aa).

Belongs to the RuvA family. As to quaternary structure, homotetramer. Forms an RuvA(8)-RuvB(12)-Holliday junction (HJ) complex. HJ DNA is sandwiched between 2 RuvA tetramers; dsDNA enters through RuvA and exits via RuvB. An RuvB hexamer assembles on each DNA strand where it exits the tetramer. Each RuvB hexamer is contacted by two RuvA subunits (via domain III) on 2 adjacent RuvB subunits; this complex drives branch migration. In the full resolvosome a probable DNA-RuvA(4)-RuvB(12)-RuvC(2) complex forms which resolves the HJ.

Its subcellular location is the cytoplasm. The RuvA-RuvB-RuvC complex processes Holliday junction (HJ) DNA during genetic recombination and DNA repair, while the RuvA-RuvB complex plays an important role in the rescue of blocked DNA replication forks via replication fork reversal (RFR). RuvA specifically binds to HJ cruciform DNA, conferring on it an open structure. The RuvB hexamer acts as an ATP-dependent pump, pulling dsDNA into and through the RuvAB complex. HJ branch migration allows RuvC to scan DNA until it finds its consensus sequence, where it cleaves and resolves the cruciform DNA. The sequence is that of Holliday junction branch migration complex subunit RuvA from Clavibacter sepedonicus (Clavibacter michiganensis subsp. sepedonicus).